A 253-amino-acid polypeptide reads, in one-letter code: Testis-expressed protein 47 (253 aa).

As to expression, testis-specific.

The sequence is that of Testis-expressed protein 47 from Homo sapiens (Human).